The chain runs to 391 residues: ATP phosphoribosyltransferase regulatory subunit (391 aa).

The protein belongs to the class-II aminoacyl-tRNA synthetase family. HisZ subfamily. In terms of assembly, heteromultimer composed of HisG and HisZ subunits.

It is found in the cytoplasm. It participates in amino-acid biosynthesis; L-histidine biosynthesis; L-histidine from 5-phospho-alpha-D-ribose 1-diphosphate: step 1/9. Required for the first step of histidine biosynthesis. May allow the feedback regulation of ATP phosphoribosyltransferase activity by histidine. The polypeptide is ATP phosphoribosyltransferase regulatory subunit (Bacillus licheniformis (strain ATCC 14580 / DSM 13 / JCM 2505 / CCUG 7422 / NBRC 12200 / NCIMB 9375 / NCTC 10341 / NRRL NRS-1264 / Gibson 46)).